Consider the following 89-residue polypeptide: Large ribosomal subunit protein bL27 (89 aa).

Residues 1–24 (MAHKKAGGSSRNGRDSDGRRLGVK) form a disordered region.

The protein belongs to the bacterial ribosomal protein bL27 family.

This chain is Large ribosomal subunit protein bL27, found in Azorhizobium caulinodans (strain ATCC 43989 / DSM 5975 / JCM 20966 / LMG 6465 / NBRC 14845 / NCIMB 13405 / ORS 571).